We begin with the raw amino-acid sequence, 187 residues long: Adenylate kinase (187 aa).

10-15 provides a ligand contact to ATP; it reads GSGKGT. An NMP region spans residues 30-59; that stretch reads STGDLLRSEVVAGTPLGLQAKQVMAQGDLV. AMP contacts are provided by residues Thr-31, Arg-36, 57 to 59, 85 to 88, and Gln-92; these read DLV and GYPR. Positions 126 to 136 are LID; it reads GRAQAEGREDD. An ATP-binding site is contributed by Arg-127. Residues Arg-133 and Arg-144 each contribute to the AMP site. Gly-172 is a binding site for ATP.

Belongs to the adenylate kinase family. In terms of assembly, monomer.

The protein resides in the cytoplasm. The enzyme catalyses AMP + ATP = 2 ADP. It functions in the pathway purine metabolism; AMP biosynthesis via salvage pathway; AMP from ADP: step 1/1. Its function is as follows. Catalyzes the reversible transfer of the terminal phosphate group between ATP and AMP. Plays an important role in cellular energy homeostasis and in adenine nucleotide metabolism. This Xylella fastidiosa (strain M23) protein is Adenylate kinase.